Here is a 929-residue protein sequence, read N- to C-terminus: Facilitated trehalose transporter Tret1 (929 aa).

The tract at residues 1 to 275 (MSGRDNRAAG…VGYQQQKATS (275 aa)) is disordered. The Cytoplasmic portion of the chain corresponds to 1 to 462 (MSGRDNRAAG…LEVYRPTTNP (462 aa)). The span at 10–26 (GAGGGSGGGGGGGGGGG) shows a compositional bias: gly residues. Residues 41 to 59 (KLKEKLTRAGEELGYHRVE) show a composition bias toward basic and acidic residues. Residues 60–72 (SNLSASNTATSLD) are compositionally biased toward polar residues. Composition is skewed to low complexity over residues 85-141 (AAPQ…QPLR), 168-178 (QEIQQQQLQQQ), and 237-254 (SNSNNNSKNNSKTTVAAD). 3 positions are modified to phosphoserine: serine 320, serine 321, and serine 322. Residues 352–371 (VLHGSSTDSDEEGEDAEHKR) are disordered. Serine 392 and serine 394 each carry phosphoserine. Residues 398–420 (FLSSRQNFQQQRSISTDSRKSRR) form a disordered region. The segment covering 402 to 413 (RQNFQQQRSIST) has biased composition (polar residues). A helical transmembrane segment spans residues 463 to 483 (IYIWTQVLAALSVSLGSLVVG). The Extracellular portion of the chain corresponds to 484–512 (FSSAYTSPALVSMTDRNLTSFDVSTEDAS). An N-linked (GlcNAc...) asparagine glycan is attached at asparagine 500. The chain crosses the membrane as a helical span at residues 513–533 (WVGGIMPLAGLAGGIAGGPLI). Topologically, residues 534–541 (EYLGRRNT) are cytoplasmic. A helical transmembrane segment spans residues 542–562 (ILATAVPFIISWLLIACAVNV). The Extracellular segment spans residues 563-569 (PMVLSGR). A helical transmembrane segment spans residues 570-590 (FLAGFCVGIASLSLPVYLGET). At 591 to 596 (VQPEVR) the chain is on the cytoplasmic side. A helical transmembrane segment spans residues 597 to 617 (GTLGLLPTAFGNIGILLCFIA). Residues 618 to 624 (GTYMDWS) are Extracellular-facing. The helical transmembrane segment at 625-645 (MLAFLGGALPVPFLILMFLIP) threads the bilayer. The Cytoplasmic portion of the chain corresponds to 646–708 (ETPRWYVSRG…ELLKRSNLKP (63 aa)). A helical membrane pass occupies residues 709–729 (LSISLGLMFFQQLSGINAVIF). The Extracellular segment spans residues 730 to 745 (YTVQIFKDAGSTLDGN). A helical transmembrane segment spans residues 746–766 (VCTIIVGTVNFIATFIGILLI). Over 767–772 (DRAGRK) the chain is Cytoplasmic. A helical membrane pass occupies residues 773–793 (ILLYVSNIAMILTLFVLGGFF). The Extracellular portion of the chain corresponds to 794-804 (YCKANGMDVSN). Residues 805 to 825 (VGLLPLCCFVVYILGFSLGFG) traverse the membrane as a helical segment. Over 826 to 839 (PIPWLMMGEILPAK) the chain is Cytoplasmic. The chain crosses the membrane as a helical span at residues 840–860 (IRGSAASVATAFNWTCTFVVT). At 861-873 (KSFLDMIKLIGAH) the chain is on the extracellular side. The helical transmembrane segment at 874–894 (GAFWLFGVICCIGMFFVIFCV) threads the bilayer. Topologically, residues 895-929 (PETQGKTLEDIERKMMGRVRRMSSVANIKPLSFNM) are cytoplasmic. 2 positions are modified to phosphoserine: serine 917 and serine 918.

The protein belongs to the major facilitator superfamily. Sugar transporter (TC 2.A.1.1) family. Trehalose transporter subfamily.

The protein resides in the cell membrane. Functionally, low-capacity facilitative transporter for trehalose. Does not transport maltose, sucrose or lactose. Mediates the bidirectional transfer of trehalose. Responsible for the transport of trehalose synthesized in the fat body and the incorporation of trehalose into other tissues that require a carbon source, thereby regulating trehalose levels in the hemolymph. The polypeptide is Facilitated trehalose transporter Tret1 (Drosophila grimshawi (Hawaiian fruit fly)).